Consider the following 2667-residue polypeptide: eIF-2-alpha kinase activator GCN1 (2667 aa).

HEAT repeat units follow at residues 19–56 (DSFY…HELS), 95–132 (QWIF…VKFT), 159–198 (SFSL…LQHM), 293–330 (DLQS…DFNV), 336–375 (LLKS…RSKD), 398–439 (SQKL…SISI), 466–503 (ELPE…PEAN), and 794–832 (LLNE…ELFV). Positions 842–879 (RNDRKVKPKTAEEQRDEESRKRIEEKKKIQSGELEKQE) are disordered. 18 HEAT repeats span residues 929 to 967 (PIIV…LDRS), 985 to 1024 (LSEI…IIKN), 1085 to 1122 (GVET…IYSP), 1199 to 1237 (HMIP…ATAL), 1290 to 1330 (GELL…HMDA), 1333 to 1370 (PKVS…SFKK), 1371 to 1407 (QGDR…VKGL), 1412 to 1450 (LKNY…TIGR), 1454 to 1491 (PYII…QLSG), 1492 to 1529 (HGVK…CAPK), 1533 to 1570 (SCLP…VIRN), 1572 to 1608 (EIQI…HTID), 1610 to 1647 (ASLS…LTEP), 1652 to 1689 (PYLN…GMGE), 1691 to 1728 (NFST…SLDI), 1729 to 1766 (SRFN…SLGD), 1770 to 1807 (PYLP…QFAV), and 1809 to 1845 (GIEV…KLAG). The interval 1853 to 1875 (SNNSSYNAKDDDDDEPGSSGNDI) is disordered. 10 HEAT repeats span residues 1882-1919 (ERLG…NTPK), 1923-1960 (EILP…KLSD), 1962-1998 (ILPE…SAKT), 2002-2039 (PYLS…TFGS), 2040-2078 (KASN…VRSS), 2080-2110 (VLPV…DAGE), 2114-2152 (VHLS…SIDE), 2154-2190 (GWDT…GNTM), 2193-2230 (EYPE…SLKK), and 2264-2301 (KGLA…HTSA). Residues 2265–2412 (GLASVLPVLI…ISQESKLRAL (148 aa)) form an RWDBD region region. Residues 2326–2348 (QVKSAILQTLSLLISKSPASMKI) form an HEAT 37; degenerate repeat. One copy of the HEAT 38; degenerate repeat lies at 2349–2385 (FLHQLQPTFIKCLSDSHKNVRTNAASALGLLMTLSSS). HEAT repeat units follow at residues 2387-2421 (DQLV…KKPK), 2425-2462 (ATLD…CFTS), 2508-2545 (PNMP…ASPL), and 2546-2583 (TYAK…SNQQ).

The protein belongs to the GCN1 family. In terms of assembly, interacts with eif2ak4/gcn2; this interaction stimulates the eif2ak4/gcn2 kinase activity and is impaired by impact upon a variety of stress conditions, such as amino acid depletion, UV-C irradiation, proteasome inhibitor treatment and glucose deprivation. Interacts with impact; this prevents the interaction of gcn1 with eif2ak4/gcn2 and inhibits eif2ak4/gcn2 kinase activity.

It is found in the cytoplasm. In terms of biological role, ribosome collision sensor that activates a translation quality control pathway when a ribosome has stalled during translation. Directly binds to the ribosome and acts as a sentinel for colliding ribosomes. Gcn1 also acts as a positive activator of the integrated stress response (ISR) by mediating activation of eif2ak4/gcn2 in response to amino acid starvation. Interaction with eif2ak4/gcn2 on translating ribosomes stimulates eif2ak4/gcn2 kinase activity, leading to phosphorylation of eukaryotic translation initiation factor 2 (eIF-2-alpha/eif2s1). EIF2S1/eIF-2-alpha phosphorylation converts EIF2S1/eIF-2-alpha into a global protein synthesis inhibitor, leading to a global attenuation of cap-dependent translation, and thus to a reduced overall utilization of amino acids, while concomitantly initiating the preferential translation of ISR-specific mRNAs, such as the transcriptional activator atf4, and hence allowing atf4-mediated reprogramming of amino acid biosynthetic gene expression to alleviate nutrient depletion. The chain is eIF-2-alpha kinase activator GCN1 from Dictyostelium discoideum (Social amoeba).